The primary structure comprises 382 residues: Apolipoprotein A-IV (382 aa).

Positions 1–20 are cleaved as a signal peptide; that stretch reads MFLKAVVLSLALVAVTGARA. Repeat copies occupy residues 33–54, 60–81, 82–103, 115–136, 137–158, 159–180, 181–202, 203–224, 225–246, 247–268, 269–286, 287–308, and 309–330. A 13 X 22 AA approximate tandem repeats region spans residues 33 to 330; sequence DYFSQLGSNA…QVEDLRQKLG (298 aa). The segment at 361–382 is disordered; the sequence is EASQGQSQALPAQEKAQAPLEG.

This sequence belongs to the apolipoprotein A1/A4/E family. Homodimer. As to expression, secreted in plasma.

The protein localises to the secreted. Its function is as follows. May have a role in chylomicrons and VLDL secretion and catabolism. Required for efficient activation of lipoprotein lipase by ApoC-II; potent activator of LCAT. Apoa-IV is a major component of HDL and chylomicrons. This chain is Apolipoprotein A-IV (APOA4), found in Sus scrofa (Pig).